The sequence spans 473 residues: Inactive pancreatic lipase-related protein 1 (473 aa).

Residues Met1–Gly17 form the signal peptide. Cystine bridges form between Cys21–Cys27 and Cys109–Cys120. Ser171 acts as the Nucleophile in catalysis. The active-site Charge relay system is Asp194. The Ca(2+) site is built by Glu205, Arg208, Asp210, and Asp213. Residues Cys255 and Cys279 are joined by a disulfide bond. Residue His281 is the Charge relay system of the active site. Cystine bridges form between Cys303-Cys314, Cys317-Cys322, and Cys451-Cys467. The region spanning Trp356–Cys467 is the PLAT domain.

It belongs to the AB hydrolase superfamily. Lipase family. As to expression, expressed in female, but not in male, lacrimal gland. Expressed in male and female sublingual gland and pancreas.

The protein resides in the secreted. Its function is as follows. May function as inhibitor of dietary triglyceride digestion. Lacks detectable lipase activity (in vitro). The polypeptide is Inactive pancreatic lipase-related protein 1 (Pnliprp1) (Mus musculus (Mouse)).